Reading from the N-terminus, the 210-residue chain is MIKQPALVQEQYACVYAWLALLFFREVDDEGLIQLQSAEIADWLALLKRQPALAASVALLEQKIAALSLRQDAQLELAADFCGLFLMTDKKSALPYASQYPQQEPGMIKHLLLEAGMEVNDDFKEPADHLAIYLELLSHLHFSLGESFQQRRMNKLRQKTLSSLLEWLPEFTNNCLKHDPYGFYAALSQLLLAIVRFDDGKEDLSIVAAE.

The protein belongs to the TorD/DmsD family. TorD subfamily.

It localises to the cytoplasm. Involved in the biogenesis of TorA. Acts on TorA before the insertion of the molybdenum cofactor and, as a result, probably favors a conformation of the apoenzyme that is competent for acquiring the cofactor. This chain is Chaperone protein TorD, found in Salmonella paratyphi B (strain ATCC BAA-1250 / SPB7).